A 902-amino-acid chain; its full sequence is Cytosolic 10-formyltetrahydrofolate dehydrogenase (902 aa).

A hydrolase domain region spans residues 1-310 (MKIAVIGQSL…PASQYYKTAD (310 aa)). 88-90 (QFI) serves as a coordination point for (6R)-10-formyltetrahydrofolate. Residue His-106 is the Proton donor of the active site. A (6R)-10-formyltetrahydrofolate-binding site is contributed by Asp-142. A Carrier domain is found at 318 to 395 (DEEKKFSEEI…EFIQMVVRRL (78 aa)). Ser-354 carries the post-translational modification O-(pantetheine 4'-phosphoryl)serine. An aldehyde dehydrogenase domain region spans residues 417-902 (TVKIPHQLFI…LKTKAVTIEY (486 aa)). Residues 571–573 (IPW), 597–600 (KPAQ), 630–635 (GSLIGQ), 650–651 (GS), and 673–674 (EL) contribute to the NADP(+) site. Glu-673 (proton acceptor) is an active-site residue. Residue Cys-707 is the Proton donor of the active site. Residues Lys-757 and 804–806 (ESF) contribute to the NADP(+) site.

In the N-terminal section; belongs to the GART family. This sequence in the C-terminal section; belongs to the aldehyde dehydrogenase family. ALDH1L subfamily. In terms of assembly, homotetramer. In terms of processing, phosphopantetheinylation at Ser-354 by AASDHPPT is required for the formyltetrahydrofolate dehydrogenase activity.

It localises to the cytoplasm. The protein localises to the cytosol. The enzyme catalyses (6R)-10-formyltetrahydrofolate + NADP(+) + H2O = (6S)-5,6,7,8-tetrahydrofolate + CO2 + NADPH + H(+). Its function is as follows. Cytosolic 10-formyltetrahydrofolate dehydrogenase that catalyzes the NADP(+)-dependent conversion of 10-formyltetrahydrofolate to tetrahydrofolate and carbon dioxide. May also have an NADP(+)-dependent aldehyde dehydrogenase activity towards formaldehyde, acetaldehyde, propionaldehyde, and benzaldehyde. Regulates reduced folate pools as well as glycine metabolism. The polypeptide is Cytosolic 10-formyltetrahydrofolate dehydrogenase (aldh1l1) (Xenopus tropicalis (Western clawed frog)).